A 183-amino-acid chain; its full sequence is uncharacterized protein (183 aa).

A compositionally biased stretch (low complexity) spans 105 to 149; sequence YNTNNSNTNTNYNNNNNNNNNNNNNNNNNNNKNNNNNNNNNNSNS. Residues 105–151 form a disordered region; that stretch reads YNTNNSNTNTNYNNNNNNNNNNNNNNNNNNNKNNNNNNNNNNSNSKI.

This is an uncharacterized protein from Dictyostelium discoideum (Social amoeba).